Consider the following 116-residue polypeptide: Aspartate 1-decarboxylase (116 aa).

The active-site Schiff-base intermediate with substrate; via pyruvic acid is Ser-25. Ser-25 is subject to Pyruvic acid (Ser). Thr-57 contributes to the substrate binding site. Catalysis depends on Tyr-58, which acts as the Proton donor. Position 73 to 75 (73 to 75 (GAA)) interacts with substrate.

The protein belongs to the PanD family. As to quaternary structure, heterooctamer of four alpha and four beta subunits. It depends on pyruvate as a cofactor. Is synthesized initially as an inactive proenzyme, which is activated by self-cleavage at a specific serine bond to produce a beta-subunit with a hydroxyl group at its C-terminus and an alpha-subunit with a pyruvoyl group at its N-terminus.

The protein localises to the cytoplasm. It catalyses the reaction L-aspartate + H(+) = beta-alanine + CO2. It participates in cofactor biosynthesis; (R)-pantothenate biosynthesis; beta-alanine from L-aspartate: step 1/1. Catalyzes the pyruvoyl-dependent decarboxylation of aspartate to produce beta-alanine. This chain is Aspartate 1-decarboxylase, found in Fervidobacterium nodosum (strain ATCC 35602 / DSM 5306 / Rt17-B1).